A 426-amino-acid polypeptide reads, in one-letter code: Serine hydroxymethyltransferase (426 aa).

(6S)-5,6,7,8-tetrahydrofolate is bound by residues Leu-122 and 126–128; that span reads GHL. Position 231 is an N6-(pyridoxal phosphate)lysine (Lys-231).

This sequence belongs to the SHMT family. Homodimer. Pyridoxal 5'-phosphate is required as a cofactor.

It is found in the cytoplasm. It carries out the reaction (6R)-5,10-methylene-5,6,7,8-tetrahydrofolate + glycine + H2O = (6S)-5,6,7,8-tetrahydrofolate + L-serine. It participates in one-carbon metabolism; tetrahydrofolate interconversion. It functions in the pathway amino-acid biosynthesis; glycine biosynthesis; glycine from L-serine: step 1/1. In terms of biological role, catalyzes the reversible interconversion of serine and glycine with tetrahydrofolate (THF) serving as the one-carbon carrier. This reaction serves as the major source of one-carbon groups required for the biosynthesis of purines, thymidylate, methionine, and other important biomolecules. Also exhibits THF-independent aldolase activity toward beta-hydroxyamino acids, producing glycine and aldehydes, via a retro-aldol mechanism. The sequence is that of Serine hydroxymethyltransferase from Koribacter versatilis (strain Ellin345).